A 254-amino-acid chain; its full sequence is Isoprenyl transferase (254 aa).

D34 is an active-site residue. D34 serves as a coordination point for Mg(2+). Substrate is bound by residues 35–38 (GNGR), W39, R47, H51, and 79–81 (STE). N82 functions as the Proton acceptor in the catalytic mechanism. Substrate is bound by residues W83, R85, R202, and 208–210 (RIS). E221 is a Mg(2+) binding site.

The protein belongs to the UPP synthase family. As to quaternary structure, homodimer. Mg(2+) is required as a cofactor.

In terms of biological role, catalyzes the condensation of isopentenyl diphosphate (IPP) with allylic pyrophosphates generating different type of terpenoids. The polypeptide is Isoprenyl transferase (Staphylococcus saprophyticus subsp. saprophyticus (strain ATCC 15305 / DSM 20229 / NCIMB 8711 / NCTC 7292 / S-41)).